The following is a 113-amino-acid chain: Vitelline membrane protein Vm32E (113 aa).

The N-terminal stretch at 1-17 (MKIVAFTLVAFVALAGA) is a signal peptide. In terms of domain architecture, VM spans 33-70 (GYPAPPCPTNYLFSCQPNLAPVPCAQQAPAYGSAGAYT).

The protein belongs to the vitelline membrane family.

The protein localises to the secreted. Functionally, major early eggshell protein. This chain is Vitelline membrane protein Vm32E, found in Drosophila erecta (Fruit fly).